Consider the following 389-residue polypeptide: Phospho-N-acetylmuramoyl-pentapeptide-transferase (389 aa).

A run of 10 helical transmembrane segments spans residues 25-45 (RAVM…PWVI), 73-93 (TMGG…WGDL), 97-117 (FIWI…VDDY), 135-155 (FWQS…VSEA), 190-210 (ISYP…IVGA), 222-242 (GLVI…AYVM), 258-278 (GAGE…AFLW), 286-306 (VFMG…VAVI), 311-331 (IVLF…MLQV), and 366-386 (QVVV…LSTL).

This sequence belongs to the glycosyltransferase 4 family. MraY subfamily. Mg(2+) is required as a cofactor.

The protein localises to the cell inner membrane. It carries out the reaction UDP-N-acetyl-alpha-D-muramoyl-L-alanyl-gamma-D-glutamyl-meso-2,6-diaminopimeloyl-D-alanyl-D-alanine + di-trans,octa-cis-undecaprenyl phosphate = di-trans,octa-cis-undecaprenyl diphospho-N-acetyl-alpha-D-muramoyl-L-alanyl-D-glutamyl-meso-2,6-diaminopimeloyl-D-alanyl-D-alanine + UMP. The protein operates within cell wall biogenesis; peptidoglycan biosynthesis. Catalyzes the initial step of the lipid cycle reactions in the biosynthesis of the cell wall peptidoglycan: transfers peptidoglycan precursor phospho-MurNAc-pentapeptide from UDP-MurNAc-pentapeptide onto the lipid carrier undecaprenyl phosphate, yielding undecaprenyl-pyrophosphoryl-MurNAc-pentapeptide, known as lipid I. This chain is Phospho-N-acetylmuramoyl-pentapeptide-transferase, found in Burkholderia vietnamiensis (strain G4 / LMG 22486) (Burkholderia cepacia (strain R1808)).